Here is a 243-residue protein sequence, read N- to C-terminus: Glutathione S-transferase U14 (243 aa).

Residues Asp5–Pro87 enclose the GST N-terminal domain. Glutathione-binding positions include Asp15–Pro16, Glu44–Lys45, Lys58–Thr59, and Glu71–Ser72. Positions Asn93 to Leu220 constitute a GST C-terminal domain. Thr159 is modified (phosphothreonine).

The protein belongs to the GST superfamily. Tau family.

The protein resides in the cytoplasm. Its subcellular location is the cytosol. It carries out the reaction RX + glutathione = an S-substituted glutathione + a halide anion + H(+). Functionally, may be involved in the conjugation of reduced glutathione to a wide number of exogenous and endogenous hydrophobic electrophiles and have a detoxification role against certain herbicides. This chain is Glutathione S-transferase U14 (GSTU14), found in Arabidopsis thaliana (Mouse-ear cress).